A 798-amino-acid chain; its full sequence is Phenylalanine--tRNA ligase beta subunit (798 aa).

The tRNA-binding domain maps to 39-147 (AARLAGFTLA…PSGEVGERFI (109 aa)). The region spanning 404 to 475 (DHSRAYKLDA…RIASLTKLVG (72 aa)) is the B5 domain. Mg(2+) is bound by residues Asp453, Asp459, Glu462, and Glu463. An FDX-ACB domain is found at 704 to 797 (RDLQAVERDF…VAKATGGTLR (94 aa)).

Belongs to the phenylalanyl-tRNA synthetase beta subunit family. Type 1 subfamily. As to quaternary structure, tetramer of two alpha and two beta subunits. Requires Mg(2+) as cofactor.

It localises to the cytoplasm. The enzyme catalyses tRNA(Phe) + L-phenylalanine + ATP = L-phenylalanyl-tRNA(Phe) + AMP + diphosphate + H(+). The polypeptide is Phenylalanine--tRNA ligase beta subunit (Ruegeria pomeroyi (strain ATCC 700808 / DSM 15171 / DSS-3) (Silicibacter pomeroyi)).